Consider the following 463-residue polypeptide: SPARC-related modular calcium-binding protein 1 (463 aa).

Residues 1–25 (MLPARVRLLTPHLLLVLVQLSPAGG) form the signal peptide. The Kazal-like domain occupies 36–88 (SDRDPPCNPHCPRTQPKPICASDGRSYESMCEYQRAKCRDPALAVVHRGRCKD). 6 cysteine pairs are disulfide-bonded: C42/C73, C46/C66, C55/C86, C94/C117, C128/C135, and C137/C157. The region spanning 91-157 (QSKCRLERAQ…SSVQNKTPVC (67 aa)) is the Thyroglobulin type-1 1 domain. Residue N224 is glycosylated (N-linked (GlcNAc...) asparagine). Residues 234–302 (VHSCDQERQS…TSTRYVMPSC (69 aa)) enclose the Thyroglobulin type-1 2 domain. Intrachain disulfides connect C237-C261, C272-C279, and C281-C302. EF-hand domains are found at residues 369–404 (LEER…VKKK) and 406–441 (KPKK…SKEG). Ca(2+) is bound by residues D382, N384, S386, D388, E393, D419, N421, D423, and E430. Residue N384 is glycosylated (N-linked (GlcNAc...) asparagine).

Glycosylated. As to expression, widely expressed in many tissues with a strongest signal in ovary.

It is found in the secreted. The protein localises to the extracellular space. It localises to the extracellular matrix. The protein resides in the basement membrane. Functionally, probable regulator of osteoblast differentiation. Plays essential roles in both eye and limb development. This chain is SPARC-related modular calcium-binding protein 1 (Smoc1), found in Mus musculus (Mouse).